Consider the following 315-residue polypeptide: Endolytic peptidoglycan transglycosylase RlpA (315 aa).

A signal peptide spans 1–19; the sequence is MGLALEKVCFLGVIFLISA. A lipid anchor (N-palmitoyl cysteine) is attached at Cys-20. Cys-20 is lipidated: S-diacylglycerol cysteine. Residues 68-79 are compositionally biased toward basic and acidic residues; it reads SDSQDSNTKDQP. The disordered stretch occupies residues 68–92; sequence SDSQDSNTKDQPLDNGMRDSSSIQR. An SPOR domain is found at 242–315; it reads SVSGGKFSLQ…YNQNAVLTRE (74 aa).

Belongs to the RlpA family.

Its subcellular location is the cell membrane. Functionally, lytic transglycosylase with a strong preference for naked glycan strands that lack stem peptides. The polypeptide is Endolytic peptidoglycan transglycosylase RlpA (Helicobacter pylori (strain ATCC 700392 / 26695) (Campylobacter pylori)).